We begin with the raw amino-acid sequence, 581 residues long: Trehalase (581 aa).

Belongs to the glycosyl hydrolase 15 family. Monomer.

It carries out the reaction alpha,alpha-trehalose + H2O = alpha-D-glucose + beta-D-glucose. The protein operates within glycan degradation; trehalose degradation; D-glucose from alpha,alpha-trehalose: step 1/1. With respect to regulation, inhibited by validamycin A. Its function is as follows. Catalyzes the hydrolysis of alpha,alpha-trehalose into two molecules of D-glucose. The sequence is that of Trehalase from Thermoplasma acidophilum (strain ATCC 25905 / DSM 1728 / JCM 9062 / NBRC 15155 / AMRC-C165).